Consider the following 104-residue polypeptide: MYAIIKNGGKQYKVKEGEVVKLEKFDLGIGEKVEFDTVLMGQTAEGEVKIGAPIVEGAKVVGEVVEQGRNKKVKIMKFRRRKHSMKQQGHRQYFTAVKVSSISL.

This sequence belongs to the bacterial ribosomal protein bL21 family. In terms of assembly, part of the 50S ribosomal subunit. Contacts protein L20.

This protein binds to 23S rRNA in the presence of protein L20. The protein is Large ribosomal subunit protein bL21 of Francisella philomiragia subsp. philomiragia (strain ATCC 25017 / CCUG 19701 / FSC 153 / O#319-036).